The following is a 221-amino-acid chain: uncharacterized protein (221 aa).

This is an uncharacterized protein from Acanthamoeba polyphaga (Amoeba).